A 399-amino-acid polypeptide reads, in one-letter code: Elongation factor Tu (399 aa).

Positions 10–204 (KPHVNIGTIG…AVDANIPEPV (195 aa)) constitute a tr-type G domain. The G1 stretch occupies residues 19-26 (GHVDHGKT). 19-26 (GHVDHGKT) is a GTP binding site. Position 26 (T26) interacts with Mg(2+). A G2 region spans residues 60–64 (GITIN). The G3 stretch occupies residues 81–84 (DCPG). Residues 81–85 (DCPGH) and 136–139 (NKCD) each bind GTP. Residues 136-139 (NKCD) are G4. Residues 174-176 (SGL) form a G5 region.

Belongs to the TRAFAC class translation factor GTPase superfamily. Classic translation factor GTPase family. EF-Tu/EF-1A subfamily. Monomer.

It is found in the cytoplasm. It catalyses the reaction GTP + H2O = GDP + phosphate + H(+). GTP hydrolase that promotes the GTP-dependent binding of aminoacyl-tRNA to the A-site of ribosomes during protein biosynthesis. In Synechococcus sp. (strain RCC307), this protein is Elongation factor Tu.